The following is a 354-amino-acid chain: P2Y purinoceptor 13 (354 aa).

Over 1–49 the chain is Extracellular; that stretch reads MTAAIRRQRELSILPKVTLEAMNTTVMQGFNRSERCPRDTRIVQLVFPA. 2 N-linked (GlcNAc...) asparagine glycosylation sites follow: Asn-23 and Asn-31. The helical transmembrane segment at 50–70 threads the bilayer; it reads LYTVVFLTGILLNTLALWVFV. Residues 71–77 lie on the Cytoplasmic side of the membrane; sequence HIPSSST. Residues 78 to 98 form a helical membrane-spanning segment; the sequence is FIIYLKNTLVADLIMTLMLPF. Residues 99-117 lie on the Extracellular side of the membrane; sequence KILSDSHLAPWQLRAFVCR. A disulfide bond links Cys-116 and Cys-194. The helical transmembrane segment at 118 to 138 threads the bilayer; it reads FSSVIFYETMYVGIVLLGLIA. The Cytoplasmic portion of the chain corresponds to 139 to 161; it reads FDRFLKIIRPLRNIFLKKPVFAK. Residues 162–182 form a helical membrane-spanning segment; it reads TVSIFIWFFLFFISLPNTILS. The Extracellular segment spans residues 183–211; the sequence is NKEATPSSVKKCASLKGPLGLKWHQMVNN. The chain crosses the membrane as a helical span at residues 212–232; the sequence is ICQFIFWTVFILMLVFYVVIA. At 233–252 the chain is on the cytoplasmic side; sequence KKVYDSYRKSKSKDRKNNKK. The helical transmembrane segment at 253–273 threads the bilayer; the sequence is LEGKVFVVVAVFFVCFAPFHF. Over 274-300 the chain is Extracellular; the sequence is ARVPYTHSQTNNKTDCRLQNQLFIAKE. Residue Asn-285 is glycosylated (N-linked (GlcNAc...) asparagine). A helical transmembrane segment spans residues 301–321; sequence TTLFLAATNICMDPLIYIFLC. Residues 322–333 are Cytoplasmic-facing; it reads KKFTEKLPCMQG. The interval 335-354 is disordered; sequence KTTASSQENHSSQTDNITLG.

Belongs to the G-protein coupled receptor 1 family. Strong expression in spleen and adult brain. Lower expression in placenta, lung, liver, spinal cord, thymus, small intestine, uterus, stomach, testis, fetal brain, and adrenal gland. Not detected in pancreas, heart, kidney, skeletal muscle, ovary or fetal aorta. Clearly detected in lymph node and bone marrow, weakly detected in peripheral blood mononuclear cells (PBMC) and in peripheral blood leukocytes (PBL), but not detected in polymorphonuclear cells (PMN). In the brain, detected in all brain regions examined.

The protein localises to the cell membrane. Receptor for ADP. Coupled to G(i)-proteins. May play a role in hematopoiesis and the immune system. This is P2Y purinoceptor 13 (P2RY13) from Homo sapiens (Human).